The primary structure comprises 699 residues: Tectonic-like complex member Mks1 (699 aa).

Disordered regions lie at residues 101 to 121 (RRSPISQHEGEMEKDKNEGEI) and 373 to 396 (DGFSEEADGEDEQELGDGLPIEED). Over residues 108-119 (HEGEMEKDKNEG) the composition is skewed to basic and acidic residues. In terms of domain architecture, C2 B9-type spans 434 to 560 (KRVSLLLELQ…RLQCIRPLGN (127 aa)). The segment at 632 to 661 (LELGNDSSDDGDSNDDDVRSSSNPDTSRAT) is disordered.

Probable component of the tectonic-like complex (also named MKS complex), composed of B9d1, B9d2, Cc2d2a, Mks1 and tctn. Expressed in chordotonal neurons in the antennae (at protein level). Expressed in spermatids (at protein level).

It is found in the cytoplasm. It localises to the cytoskeleton. The protein localises to the cilium basal body. The protein resides in the microtubule organizing center. Its subcellular location is the centrosome. It is found in the centriole. Its function is as follows. Probable component of the tectonic-like complex (also named MKS complex), a complex localized at the transition zone of primary cilia. Required for ciliary structure and function. The sequence is that of Tectonic-like complex member Mks1 from Drosophila melanogaster (Fruit fly).